Reading from the N-terminus, the 239-residue chain is 1-(5-phosphoribosyl)-5-[(5-phosphoribosylamino)methylideneamino] imidazole-4-carboxamide isomerase (239 aa).

The active-site Proton acceptor is Asp-8. Asp-129 acts as the Proton donor in catalysis.

Belongs to the HisA/HisF family.

The protein localises to the cytoplasm. It catalyses the reaction 1-(5-phospho-beta-D-ribosyl)-5-[(5-phospho-beta-D-ribosylamino)methylideneamino]imidazole-4-carboxamide = 5-[(5-phospho-1-deoxy-D-ribulos-1-ylimino)methylamino]-1-(5-phospho-beta-D-ribosyl)imidazole-4-carboxamide. Its pathway is amino-acid biosynthesis; L-histidine biosynthesis; L-histidine from 5-phospho-alpha-D-ribose 1-diphosphate: step 4/9. The protein is 1-(5-phosphoribosyl)-5-[(5-phosphoribosylamino)methylideneamino] imidazole-4-carboxamide isomerase of Legionella pneumophila (strain Corby).